The following is a 196-amino-acid chain: Putative NADH dehydrogenase/NAD(P)H nitroreductase xcc-b100_0585 (196 aa).

Belongs to the nitroreductase family. HadB/RutE subfamily. Requires FMN as cofactor.

The sequence is that of Putative NADH dehydrogenase/NAD(P)H nitroreductase xcc-b100_0585 from Xanthomonas campestris pv. campestris (strain B100).